The sequence spans 108 residues: Small ribosomal subunit protein uS10 (108 aa).

Belongs to the universal ribosomal protein uS10 family. As to quaternary structure, part of the 30S ribosomal subunit.

In terms of biological role, involved in the binding of tRNA to the ribosomes. This is Small ribosomal subunit protein uS10 from Ehrlichia chaffeensis (strain ATCC CRL-10679 / Arkansas).